The following is a 100-amino-acid chain: MISLSYSLSLAAILFMLGLTGIMIRRNLLFLLLGLEIMINAAALAFVIVGQYWGQADGQVMYILTVTIAATEASIGLALLLHLYRYYQTLDIDLISEMHR.

Helical transmembrane passes span 4 to 24 (LSYSLSLAAILFMLGLTGIMI), 29 to 49 (LFLLLGLEIMINAAALAFVIV), and 60 to 80 (VMYILTVTIAATEASIGLALL).

It belongs to the complex I subunit 4L family. In terms of assembly, NDH-1 is composed of 14 different subunits. Subunits NuoA, H, J, K, L, M, N constitute the membrane sector of the complex.

The protein localises to the cell membrane. It catalyses the reaction a quinone + NADH + 5 H(+)(in) = a quinol + NAD(+) + 4 H(+)(out). Its function is as follows. NDH-1 shuttles electrons from NADH, via FMN and iron-sulfur (Fe-S) centers, to quinones in the respiratory chain. The immediate electron acceptor for the enzyme in this species is believed to be ubiquinone. Couples the redox reaction to proton translocation (for every two electrons transferred, four hydrogen ions are translocated across the cytoplasmic membrane), and thus conserves the redox energy in a proton gradient. This chain is NADH-quinone oxidoreductase subunit K, found in Baumannia cicadellinicola subsp. Homalodisca coagulata.